The chain runs to 232 residues: Large ribosomal subunit protein uL1 (232 aa).

Belongs to the universal ribosomal protein uL1 family. In terms of assembly, part of the 50S ribosomal subunit.

Binds directly to 23S rRNA. The L1 stalk is quite mobile in the ribosome, and is involved in E site tRNA release. Its function is as follows. Protein L1 is also a translational repressor protein, it controls the translation of the L11 operon by binding to its mRNA. In Methylorubrum extorquens (strain CM4 / NCIMB 13688) (Methylobacterium extorquens), this protein is Large ribosomal subunit protein uL1.